Here is a 440-residue protein sequence, read N- to C-terminus: Ribulose bisphosphate carboxylase large chain (440 aa).

Residue Lys4 is modified to N6,N6,N6-trimethyllysine. Residues Asn113 and Thr163 each contribute to the substrate site. Lys165 serves as the catalytic Proton acceptor. Lys167 is a substrate binding site. Positions 191, 193, and 194 each coordinate Mg(2+). Position 191 is an N6-carboxylysine (Lys191). His284 (proton acceptor) is an active-site residue. Residues Arg285, His317, and Ser369 each coordinate substrate.

The protein belongs to the RuBisCO large chain family. Type I subfamily. As to quaternary structure, heterohexadecamer of 8 large chains and 8 small chains; disulfide-linked. The disulfide link is formed within the large subunit homodimers. The cofactor is Mg(2+). The disulfide bond which can form in the large chain dimeric partners within the hexadecamer appears to be associated with oxidative stress and protein turnover.

The protein localises to the plastid. The protein resides in the chloroplast. It carries out the reaction 2 (2R)-3-phosphoglycerate + 2 H(+) = D-ribulose 1,5-bisphosphate + CO2 + H2O. The enzyme catalyses D-ribulose 1,5-bisphosphate + O2 = 2-phosphoglycolate + (2R)-3-phosphoglycerate + 2 H(+). RuBisCO catalyzes two reactions: the carboxylation of D-ribulose 1,5-bisphosphate, the primary event in carbon dioxide fixation, as well as the oxidative fragmentation of the pentose substrate in the photorespiration process. Both reactions occur simultaneously and in competition at the same active site. In Polystichum munitum (Western sword-fern), this protein is Ribulose bisphosphate carboxylase large chain.